The primary structure comprises 362 residues: Methylthioribose-1-phosphate isomerase (362 aa).

Substrate is bound by residues 53–55 (RGA), R90, and Q201. Catalysis depends on D241, which acts as the Proton donor. 251–252 (NK) is a binding site for substrate.

The protein belongs to the eIF-2B alpha/beta/delta subunits family. MtnA subfamily.

The catalysed reaction is 5-(methylsulfanyl)-alpha-D-ribose 1-phosphate = 5-(methylsulfanyl)-D-ribulose 1-phosphate. It functions in the pathway amino-acid biosynthesis; L-methionine biosynthesis via salvage pathway; L-methionine from S-methyl-5-thio-alpha-D-ribose 1-phosphate: step 1/6. In terms of biological role, catalyzes the interconversion of methylthioribose-1-phosphate (MTR-1-P) into methylthioribulose-1-phosphate (MTRu-1-P). The sequence is that of Methylthioribose-1-phosphate isomerase from Dechloromonas aromatica (strain RCB).